The chain runs to 84 residues: Metallothionein-like protein 2C (84 aa).

This sequence belongs to the metallothionein superfamily. Type 15 family.

Its subcellular location is the cytoplasm. It is found in the cytosol. Its function is as follows. Metallothioneins have a high content of cysteine residues that bind various heavy metals. Acts as a reactive oxygen species (ROS) scavenger in the cytosol. Possesses superoxide anion and hydroxyl radical scavenging activities in vitro. Plays a role during root development, lateral root initiation and seed embryo germination, possibly by regulating levels of cytokinin. The protein is Metallothionein-like protein 2C (MT2C) of Oryza sativa subsp. indica (Rice).